Consider the following 954-residue polypeptide: Glycine dehydrogenase (decarboxylating) (954 aa).

The residue at position 706 (lysine 706) is an N6-(pyridoxal phosphate)lysine.

This sequence belongs to the GcvP family. In terms of assembly, the glycine cleavage system is composed of four proteins: P, T, L and H. Requires pyridoxal 5'-phosphate as cofactor.

It catalyses the reaction N(6)-[(R)-lipoyl]-L-lysyl-[glycine-cleavage complex H protein] + glycine + H(+) = N(6)-[(R)-S(8)-aminomethyldihydrolipoyl]-L-lysyl-[glycine-cleavage complex H protein] + CO2. Its function is as follows. The glycine cleavage system catalyzes the degradation of glycine. The P protein binds the alpha-amino group of glycine through its pyridoxal phosphate cofactor; CO(2) is released and the remaining methylamine moiety is then transferred to the lipoamide cofactor of the H protein. The polypeptide is Glycine dehydrogenase (decarboxylating) (Pseudomonas savastanoi pv. phaseolicola (strain 1448A / Race 6) (Pseudomonas syringae pv. phaseolicola (strain 1448A / Race 6))).